Consider the following 345-residue polypeptide: S-adenosylmethionine:tRNA ribosyltransferase-isomerase (345 aa).

The protein belongs to the QueA family. In terms of assembly, monomer.

Its subcellular location is the cytoplasm. It carries out the reaction 7-aminomethyl-7-carbaguanosine(34) in tRNA + S-adenosyl-L-methionine = epoxyqueuosine(34) in tRNA + adenine + L-methionine + 2 H(+). It participates in tRNA modification; tRNA-queuosine biosynthesis. Its function is as follows. Transfers and isomerizes the ribose moiety from AdoMet to the 7-aminomethyl group of 7-deazaguanine (preQ1-tRNA) to give epoxyqueuosine (oQ-tRNA). This chain is S-adenosylmethionine:tRNA ribosyltransferase-isomerase, found in Anaeromyxobacter sp. (strain K).